A 557-amino-acid chain; its full sequence is MSKLIRRVVTVLALTSMASSFASGKIEAAAAESLATRFIASTENSNDNVLQATAKKVRFGRNKNQRQEQKHTGAFCDKEFYPCEGGQCQSVDTTQESCYGKMYCVRVNDDCNVEISQAVPEYATVGSPYPIEILAVGKKDCVNVVITQQLPCEVEFVSSDPATTPTSDSKLIWTIDCLGQGEKCKITVWVKPLKEGCCFTAATVCACPELRSYTKCGQPAICIKQEGPECACLRCPVCYKIEVCNTGSAIARNVVVDNPVPDGYTHASGQRVLSFNLGDMRPGDSKCFSVEFCPQKRGKITNVATVSYCGGHKCSANVTTVVNEPCVQVNISGADWSYVCKPVEYTIVVSNLGDLKLYDVVVEDTVPSGATILEAEGAEICCNKAVWCIKEMCPGETLQFKVVAKAQSPGKFTNQVVVKTNSDCGTCTSCAEATTHWKGLAATHMCVIDTNDPICVGENTVYRICVTNRGSAEDTNVSLILKFSKELQPVSSSGPTKGTITGNTVVFDALPKLGSKESVEFSVTLKGIAPGDARGEAILSSDTLTVPVADTENTHVY.

The first 22 residues, 1–22 (MSKLIRRVVTVLALTSMASSFA), serve as a signal peptide directing secretion. Positions 23-40 (SGKIEAAAAESLATRFIA) are excised as a propeptide.

As to quaternary structure, part of a disulfide cross-linked outer membrane complex (COMC) composed of the major outer membrane porin (MOMP), the small cysteine-rich protein (OmcA) and the large cysteine-rich periplasmic protein (OmcB).

It is found in the periplasm. Functionally, in elementary bodies (EBs, the infectious stage, which is able to survive outside the host cell) provides the structural integrity of the outer envelope through disulfide cross-links with the small cysteine-rich protein and the major outer membrane porin. It has been described in publications as the Sarkosyl-insoluble COMC (Chlamydia outer membrane complex), and serves as the functional equivalent of peptidoglycan. It is present but the disulfide bonds are reduced in reticulate bodies (RBs). The protein is Large cysteine-rich periplasmic protein OmcB (omcB) of Chlamydia abortus (strain DSM 27085 / S26/3) (Chlamydophila abortus).